The chain runs to 498 residues: Acetyl-coenzyme A carboxylase carboxyl transferase subunit beta, chloroplastic (498 aa).

The 271-residue stretch at 228 to 498 (LWVQCEICYG…LNHNLSRTLT (271 aa)) folds into the CoA carboxyltransferase N-terminal domain. The Zn(2+) site is built by Cys-232, Cys-235, Cys-251, and Cys-254. The segment at 232 to 254 (CEICYGLNYKKFFKSKMNICEQC) adopts a C4-type zinc-finger fold.

The protein belongs to the AccD/PCCB family. In terms of assembly, acetyl-CoA carboxylase is a heterohexamer composed of biotin carboxyl carrier protein, biotin carboxylase and 2 subunits each of ACCase subunit alpha and ACCase plastid-coded subunit beta (accD). It depends on Zn(2+) as a cofactor.

It is found in the plastid. It localises to the chloroplast stroma. The enzyme catalyses N(6)-carboxybiotinyl-L-lysyl-[protein] + acetyl-CoA = N(6)-biotinyl-L-lysyl-[protein] + malonyl-CoA. It participates in lipid metabolism; malonyl-CoA biosynthesis; malonyl-CoA from acetyl-CoA: step 1/1. Its function is as follows. Component of the acetyl coenzyme A carboxylase (ACC) complex. Biotin carboxylase (BC) catalyzes the carboxylation of biotin on its carrier protein (BCCP) and then the CO(2) group is transferred by the transcarboxylase to acetyl-CoA to form malonyl-CoA. In Populus alba (White poplar), this protein is Acetyl-coenzyme A carboxylase carboxyl transferase subunit beta, chloroplastic.